We begin with the raw amino-acid sequence, 454 residues long: Maintenance of mitochondrial morphology protein 1 (454 aa).

Residues M1 to G128 lie on the Lumenal side of the membrane. Residues L129 to F149 traverse the membrane as a helical segment. Topologically, residues G150 to N454 are cytoplasmic. One can recognise an SMP-LTD domain in the interval Q207 to P430.

The protein belongs to the MMM1 family. As to quaternary structure, homodimer. Component of the ER-mitochondria encounter structure (ERMES) or MDM complex, composed of MMM1, MDM10, MDM12 and MDM34. An MMM1 homodimer associates with one molecule of MDM12 on each side in a pairwise head-to-tail manner, and the SMP-LTD domains of MMM1 and MDM12 generate a continuous hydrophobic tunnel for phospholipid trafficking.

The protein localises to the endoplasmic reticulum membrane. Component of the ERMES/MDM complex, which serves as a molecular tether to connect the endoplasmic reticulum (ER) and mitochondria. Components of this complex are involved in the control of mitochondrial shape and protein biogenesis, and function in nonvesicular lipid trafficking between the ER and mitochondria. The MDM12-MMM1 subcomplex functions in the major beta-barrel assembly pathway that is responsible for biogenesis of all outer membrane beta-barrel proteins, and acts in a late step after the SAM complex. The MDM10-MDM12-MMM1 subcomplex further acts in the TOM40-specific pathway after the action of the MDM12-MMM1 complex. Essential for establishing and maintaining the structure of mitochondria and maintenance of mtDNA nucleoids. The protein is Maintenance of mitochondrial morphology protein 1 of Komagataella phaffii (strain GS115 / ATCC 20864) (Yeast).